Consider the following 127-residue polypeptide: Acetylcholine receptor subunit alpha (127 aa).

Topologically, residues 1–127 are extracellular; it reads ADGIFAIDQF…YFIVNVIIPC (127 aa). The cysteines at positions 33 and 47 are disulfide-linked. Residues Asn46 and Asn94 are each glycosylated (N-linked (GlcNAc...) asparagine). Residues Cys97 and Cys98 are joined by a disulfide bond.

Belongs to the ligand-gated ion channel (TC 1.A.9) family. Acetylcholine receptor (TC 1.A.9.1) subfamily. Alpha-1/CHRNA1 sub-subfamily. One of the alpha chains that assemble within the acetylcholine receptor, a pentamer of two alpha chains, a beta, a delta, and a gamma or epsilon chains.

The protein resides in the postsynaptic cell membrane. It localises to the cell membrane. It carries out the reaction K(+)(in) = K(+)(out). The enzyme catalyses Na(+)(in) = Na(+)(out). Functionally, upon acetylcholine binding, the AChR responds by an extensive change in conformation that affects all subunits and leads to opening of an ion-conducting channel across the plasma membrane. Does not bind alpha-bungarotoxin. This chain is Acetylcholine receptor subunit alpha (CHRNA1), found in Natrix tessellata (Dice snake).